Here is a 158-residue protein sequence, read N- to C-terminus: Transcription elongation factor GreA (158 aa).

Residues 1–67 adopt a coiled-coil conformation; that stretch reads MSNNIPLTKE…FIEGRIQELQ (67 aa).

It belongs to the GreA/GreB family.

In terms of biological role, necessary for efficient RNA polymerase transcription elongation past template-encoded arresting sites. The arresting sites in DNA have the property of trapping a certain fraction of elongating RNA polymerases that pass through, resulting in locked ternary complexes. Cleavage of the nascent transcript by cleavage factors such as GreA or GreB allows the resumption of elongation from the new 3'terminus. GreA releases sequences of 2 to 3 nucleotides. The chain is Transcription elongation factor GreA from Trichlorobacter lovleyi (strain ATCC BAA-1151 / DSM 17278 / SZ) (Geobacter lovleyi).